The sequence spans 716 residues: Phosphoribosylformylglycinamidine synthase subunit PurL (716 aa).

His-33 is a catalytic residue. Tyr-36 contacts ATP. Mg(2+) is bound at residue Glu-77. Residues 78 to 81 and Arg-100 each bind substrate; that span reads SHNH. The active-site Proton acceptor is His-79. Asp-101 contacts Mg(2+). A substrate-binding site is contributed by Gln-225. Asp-253 is a binding site for Mg(2+). Substrate is bound at residue 297 to 299; it reads ESQ. 2 residues coordinate ATP: Asn-475 and Gly-512. Residue Asn-513 coordinates Mg(2+). A substrate-binding site is contributed by Ser-515.

The protein belongs to the FGAMS family. In terms of assembly, monomer. Part of the FGAM synthase complex composed of 1 PurL, 1 PurQ and 2 PurS subunits.

It localises to the cytoplasm. It carries out the reaction N(2)-formyl-N(1)-(5-phospho-beta-D-ribosyl)glycinamide + L-glutamine + ATP + H2O = 2-formamido-N(1)-(5-O-phospho-beta-D-ribosyl)acetamidine + L-glutamate + ADP + phosphate + H(+). Its pathway is purine metabolism; IMP biosynthesis via de novo pathway; 5-amino-1-(5-phospho-D-ribosyl)imidazole from N(2)-formyl-N(1)-(5-phospho-D-ribosyl)glycinamide: step 1/2. Part of the phosphoribosylformylglycinamidine synthase complex involved in the purines biosynthetic pathway. Catalyzes the ATP-dependent conversion of formylglycinamide ribonucleotide (FGAR) and glutamine to yield formylglycinamidine ribonucleotide (FGAM) and glutamate. The FGAM synthase complex is composed of three subunits. PurQ produces an ammonia molecule by converting glutamine to glutamate. PurL transfers the ammonia molecule to FGAR to form FGAM in an ATP-dependent manner. PurS interacts with PurQ and PurL and is thought to assist in the transfer of the ammonia molecule from PurQ to PurL. The protein is Phosphoribosylformylglycinamidine synthase subunit PurL of Methanosarcina mazei (strain ATCC BAA-159 / DSM 3647 / Goe1 / Go1 / JCM 11833 / OCM 88) (Methanosarcina frisia).